The primary structure comprises 433 residues: 23S rRNA (uracil(1939)-C(5))-methyltransferase RlmD (433 aa).

The TRAM domain occupies 10-68 (RTTTRQIITVSVNDLDSFGQGVARHNGKTLFIPGLLPQENAEVTVTEDKKQYARAKVVR). Residues cysteine 81, cysteine 87, cysteine 90, and cysteine 162 each contribute to the [4Fe-4S] cluster site. S-adenosyl-L-methionine-binding residues include glutamine 265, phenylalanine 294, asparagine 299, glutamate 315, asparagine 342, and aspartate 363. Residue cysteine 389 is the Nucleophile of the active site.

The protein belongs to the class I-like SAM-binding methyltransferase superfamily. RNA M5U methyltransferase family. RlmD subfamily.

It carries out the reaction uridine(1939) in 23S rRNA + S-adenosyl-L-methionine = 5-methyluridine(1939) in 23S rRNA + S-adenosyl-L-homocysteine + H(+). Functionally, catalyzes the formation of 5-methyl-uridine at position 1939 (m5U1939) in 23S rRNA. This is 23S rRNA (uracil(1939)-C(5))-methyltransferase RlmD from Shigella boydii serotype 4 (strain Sb227).